The primary structure comprises 175 residues: Development-specific protein S homolog (175 aa).

2 consecutive Beta/gamma crystallin 'Greek key' domains span residues 2–46 (ANIT…KVPP) and 48–86 (VKAILYKNDDFTGDQIEVVANAEELGPLNNNVSSIKVMS). The segment at 87–90 (VPVQ) is connecting peptide. 2 Beta/gamma crystallin 'Greek key' domains span residues 91–135 (PRAR…KPEG) and 136–175 (LKVVLFKNDNFSAGDTLSVTSNAPSLGAMNNNTSSIRITP).

It belongs to the beta/gamma-crystallin family.

It localises to the spore. Its subcellular location is the perispore. This Myxococcus xanthus protein is Development-specific protein S homolog (ops).